The sequence spans 668 residues: ATP-dependent RNA helicase MSS116, mitochondrial (668 aa).

Residues 1-38 (MLKQLSRSLGIRSSPIVANLIRSKQVCTRGFHISLVKQ) constitute a mitochondrion transit peptide. Residues 87 to 115 (DFKGKGYIHDSIINSLHKNDFKELTPIQQ) carry the Q motif motif. The 182-residue stretch at 119–300 (VPIFNTEKGL…KKHIHPEYEF (182 aa)) folds into the Helicase ATP-binding domain. Position 132–139 (132–139 (AKTGTGKT)) interacts with ATP. A DEAD box motif is present at residues 242–245 (DEAD). One can recognise a Helicase C-terminal domain in the interval 332–501 (SLSELHGIMK…NIIDQIESPL (170 aa)). The disordered stretch occupies residues 585-668 (YSDFSRSGMS…EHRRIRDHDE (84 aa)). Positions 586-597 (SDFSRSGMSQRP) are enriched in polar residues. Residues 609-636 (NGRGKYGNNRNNDWSYQNKNRYNNNNNR) show a composition bias toward low complexity. Positions 637 to 668 (QTERSYDSDRKSHNDWKYEKKFEHRRIRDHDE) are enriched in basic and acidic residues.

This sequence belongs to the DEAD box helicase family. DDX18/HAS1 subfamily.

It is found in the mitochondrion matrix. The enzyme catalyses ATP + H2O = ADP + phosphate + H(+). In terms of biological role, ATP-dependent RNA helicase required for mitochondrial splicing of group I and II introns. Also required for efficient mitochondrial translation. The polypeptide is ATP-dependent RNA helicase MSS116, mitochondrial (MSS116) (Candida albicans (strain SC5314 / ATCC MYA-2876) (Yeast)).